Consider the following 459-residue polypeptide: tRNA modification GTPase MnmE (459 aa).

Residues arginine 24, glutamate 82, and lysine 122 each coordinate (6S)-5-formyl-5,6,7,8-tetrahydrofolate. The TrmE-type G domain occupies 219–379 (GIKVVISGAP…LRQHLYFSFK (161 aa)). GTP contacts are provided by residues 229–234 (NSGKSS), 248–254 (TNFPGTT), and 273–276 (DTAG). Residues serine 233 and threonine 254 each contribute to the Mg(2+) site. Position 459 (lysine 459) interacts with (6S)-5-formyl-5,6,7,8-tetrahydrofolate.

It belongs to the TRAFAC class TrmE-Era-EngA-EngB-Septin-like GTPase superfamily. TrmE GTPase family. In terms of assembly, homodimer. Heterotetramer of two MnmE and two MnmG subunits. K(+) serves as cofactor.

The protein localises to the cytoplasm. Exhibits a very high intrinsic GTPase hydrolysis rate. Involved in the addition of a carboxymethylaminomethyl (cmnm) group at the wobble position (U34) of certain tRNAs, forming tRNA-cmnm(5)s(2)U34. This Buchnera aphidicola subsp. Baizongia pistaciae (strain Bp) protein is tRNA modification GTPase MnmE.